A 511-amino-acid polypeptide reads, in one-letter code: 2-isopropylmalate synthase (511 aa).

The Pyruvate carboxyltransferase domain occupies 5-267 (IQIFDTTLRD…ESQINLEETK (263 aa)). Positions 14, 202, 204, and 238 each coordinate Mn(2+). Residues 391–511 (QLDNLQLQYV…EYELKEGIRT (121 aa)) form a regulatory domain region.

Belongs to the alpha-IPM synthase/homocitrate synthase family. LeuA type 1 subfamily. As to quaternary structure, homodimer. Mn(2+) is required as a cofactor.

The protein resides in the cytoplasm. It carries out the reaction 3-methyl-2-oxobutanoate + acetyl-CoA + H2O = (2S)-2-isopropylmalate + CoA + H(+). It functions in the pathway amino-acid biosynthesis; L-leucine biosynthesis; L-leucine from 3-methyl-2-oxobutanoate: step 1/4. In terms of biological role, catalyzes the condensation of the acetyl group of acetyl-CoA with 3-methyl-2-oxobutanoate (2-ketoisovalerate) to form 3-carboxy-3-hydroxy-4-methylpentanoate (2-isopropylmalate). The sequence is that of 2-isopropylmalate synthase from Staphylococcus epidermidis (strain ATCC 35984 / DSM 28319 / BCRC 17069 / CCUG 31568 / BM 3577 / RP62A).